The following is a 2725-amino-acid chain: Teneurin-1 (2725 aa).

The disordered stretch occupies residues 1-48; it reads MEQTDCKPYQPLPKVKHEMDLAYTSSSDESEDGRKPRQSYNSRETLHE. In terms of domain architecture, Teneurin N-terminal spans 1–318; that stretch reads MEQTDCKPYQ…KPYRCCNWKC (318 aa). Over 1–324 the chain is Cytoplasmic; it reads MEQTDCKPYQ…NWKCTALSAT (324 aa). The Nuclear localization signal (NLS) motif lies at 62 to 65; it reads RKRK. S105 is subject to Phosphoserine. T109 carries the post-translational modification Phosphothreonine. Position 116 is a phosphoserine (S116). Positions 174 to 189 are enriched in polar residues; sequence AGSTQDVQSSPHNQFT. The disordered stretch occupies residues 174–241; it reads AGSTQDVQSS…PAPPTSTQDS (68 aa). Over residues 192–201 the composition is skewed to pro residues; sequence PLPPPPPPPH. The Required for interaction with SORBS1 (Ten-1 ICD form) signature appears at 290–297; that stretch reads PPPRPLPR. Residues 325–345 traverse the membrane as a helical segment; sequence AITVTLALLLAYVIAVHLFGL. Topologically, residues 346 to 2725 are extracellular; the sequence is TWQLQPVEGE…FMRQSEIGRR (2380 aa). N-linked (GlcNAc...) asparagine glycosylation is present at N433. EGF-like domains follow at residues 528 to 559, 560 to 591, 592 to 624, 625 to 657, 658 to 691, 692 to 721, 722 to 753, and 761 to 796; these read IMDD…PDCA, RDSC…ECDV, PEEQ…EICE, EEDC…NCET, PLPV…SDCS, TELC…GPTC, EERS…DHCT, and VRDG…TGCN. 22 disulfide bridges follow: C532–C542, C536–C547, C549–C558, C567–C578, C580–C589, C596–C607, C601–C612, C614–C623, C628–C639, C633–C644, C646–C655, C666–C679, C681–C690, C695–C705, C699–C710, C712–C721, C726–C736, C730–C741, C743–C752, C765–C775, C769–C784, and C786–C795. N-linked (GlcNAc...) asparagine glycans are attached at residues N905 and N1084. NHL repeat units lie at residues 1194–1219, 1292–1336, 1351–1402, 1414–1458, and 1481–1524; these read LFAP…VRRI, SHCG…NAVI, LSCD…IAGR, FLVS…VTTN, and CFSG…ISRN. Residues 1534–1553 form a YD 1 repeat; it reads YEIASPADQELYQFTVNGTH. N-linked (GlcNAc...) asparagine glycosylation is found at N1550 and N1567. 4 YD repeats span residues 1570-1590, 1608-1632, 1633-1654, and 1655-1675; these read YNSE…VHIR, YWLT…ALMT, YPGN…TVYE, and YDPE…SSFH. 5 N-linked (GlcNAc...) asparagine glycosylation sites follow: N1663, N1699, N1757, N1781, and N1842. YD repeat units follow at residues 1845–1864, 1865–1885, 1886–1904, 1905–1925, 1933–1949, 1950–1969, 1970–1989, 1992–2012, 2015–2035, 2085–2105, and 2113–2133; these read YSPS…EKME, YDQS…WSYT, YLEK…YIFE, YDQP…HSLQ, YRNI…FIQD, YSRD…RRVL, YKYT…TQVT, YEES…FICT, YRQT…EGLV, YDLN…FSAN, and YEIL…VGRM. N-linked (GlcNAc...) asparagine glycosylation is present at N2145. 5 YD repeats span residues 2153-2173, 2174-2194, 2196-2216, 2228-2248, and 2250-2270; these read YDAD…WRYS, YDLN…LTPL, YDLR…DEDG, YNSN…TVQY, and YDGL…LQFF. N2285 carries an N-linked (GlcNAc...) asparagine glycan. 2 YD repeats span residues 2296–2313 and 2314–2337; these read YDLQ…GEEY and YVAC…IKEI. S2580 bears the Phosphoserine mark. N-linked (GlcNAc...) asparagine glycosylation is present at N2602.

This sequence belongs to the tenascin family. Teneurin subfamily. As to quaternary structure, homodimer; disulfide-linked. Heterodimer with either TENM2 or TENM3. May also form heterodimer with TENM4. Ten-1 ICD interacts with SORBS1 (via third SH3 domain). Interacts with MBD1. Ten-1 ICD interacts with HINT1. In terms of processing, derives from the plasma membrane form by proteolytic processing. Further proteolytic cleavage may be generated. In terms of tissue distribution, expressed in fetal brain.

It localises to the cell membrane. The protein localises to the nucleus. Its subcellular location is the nucleus speckle. It is found in the nucleus matrix. The protein resides in the cytoplasm. It localises to the cytoskeleton. In terms of biological role, involved in neural development, regulating the establishment of proper connectivity within the nervous system. May function as a cellular signal transducer. Functionally, plays a role in the regulation of neuroplasticity in the limbic system. Mediates a rapid reorganization of actin- and tubulin-based cytoskeleton elements with an increase in dendritic arborization and spine density formation of neurons in the hippocampus and amygdala. Induces BDNF transcription inhibition in neurons. Activates the mitogen-activated protein (MAP) kinase 2 (MEK2) and extracellular signal-regulated kinase (ERK) cascade. Also acts as a bioactive neuroprotective peptide on limbic neurons of the brain and regulates stress-induced behavior: attenuates alkalosis-associated necrotic cell death and the effects of corticotropin-releasing factor (CRF) on c-fos/FOS induction and on the reinstatement of cocaine seeking. Induces gene transcription activation. This is Teneurin-1 (TENM1) from Homo sapiens (Human).